The primary structure comprises 602 residues: UvrABC system protein C (602 aa).

Residues 15-92 (DLPGSYQMKD…IQKYQPYYNI (78 aa)) enclose the GIY-YIG domain. One can recognise a UVR domain in the interval 197-232 (GKAKASLTAKMERAAKNLQFERAAEIRDQLHYIEQT).

It belongs to the UvrC family. Interacts with UvrB in an incision complex.

It localises to the cytoplasm. Its function is as follows. The UvrABC repair system catalyzes the recognition and processing of DNA lesions. UvrC both incises the 5' and 3' sides of the lesion. The N-terminal half is responsible for the 3' incision and the C-terminal half is responsible for the 5' incision. This chain is UvrABC system protein C, found in Lacticaseibacillus paracasei (strain ATCC 334 / BCRC 17002 / CCUG 31169 / CIP 107868 / KCTC 3260 / NRRL B-441) (Lactobacillus paracasei).